A 306-amino-acid chain; its full sequence is N-acetylmuramic acid 6-phosphate etherase (306 aa).

The region spanning 55–218 (IVPRMKKGGR…STGVMIKLGK (164 aa)) is the SIS domain. Glu-83 functions as the Proton donor in the catalytic mechanism. Glu-114 is an active-site residue.

The protein belongs to the GCKR-like family. MurNAc-6-P etherase subfamily. In terms of assembly, homodimer.

The enzyme catalyses N-acetyl-D-muramate 6-phosphate + H2O = N-acetyl-D-glucosamine 6-phosphate + (R)-lactate. The protein operates within amino-sugar metabolism; N-acetylmuramate degradation. Specifically catalyzes the cleavage of the D-lactyl ether substituent of MurNAc 6-phosphate, producing GlcNAc 6-phosphate and D-lactate. The sequence is that of N-acetylmuramic acid 6-phosphate etherase from Caldanaerobacter subterraneus subsp. tengcongensis (strain DSM 15242 / JCM 11007 / NBRC 100824 / MB4) (Thermoanaerobacter tengcongensis).